A 1302-amino-acid polypeptide reads, in one-letter code: DNA-directed RNA polymerase subunit beta (1302 aa).

It belongs to the RNA polymerase beta chain family. In terms of assembly, the RNAP catalytic core consists of 2 alpha, 1 beta, 1 beta' and 1 omega subunit. When a sigma factor is associated with the core the holoenzyme is formed, which can initiate transcription.

It catalyses the reaction RNA(n) + a ribonucleoside 5'-triphosphate = RNA(n+1) + diphosphate. Functionally, DNA-dependent RNA polymerase catalyzes the transcription of DNA into RNA using the four ribonucleoside triphosphates as substrates. In Spiroplasma citri, this protein is DNA-directed RNA polymerase subunit beta.